Consider the following 1614-residue polypeptide: Low-density lipoprotein receptor-related protein 5 (1614 aa).

The signal sequence occupies residues 1–30; it reads METAPTRAPPPPPPPLLLLVLYCSLVPAAA. A beta-propeller 1 region spans residues 31–287; sequence SPLLLFANRR…YSPMDIQVLS (257 aa). At 31-1383 the chain is on the extracellular side; that stretch reads SPLLLFANRR…PPSDDIPAHS (1353 aa). LDL-receptor class B repeat units follow at residues 74-118, 119-161, 162-205, 206-246, and 247-289; these read GAVY…DWVG, KKLY…DPAH, GYMY…DLEE, QKLY…TLSG, and DTLY…LSQE. 2 N-linked (GlcNAc...) asparagine glycosylation sites follow: asparagine 92 and asparagine 137. The region spanning 294-336 is the EGF-like 1 domain; the sequence is FHTPCEEDNGGCSHLCLLSPREPFYSCACPTGVQLQDNGKTCK. Disulfide bonds link cysteine 298–cysteine 309, cysteine 305–cysteine 320, and cysteine 322–cysteine 335. The tract at residues 340–601 is beta-propeller 2; sequence EEVLLLARRT…AVNVAKVVGT (262 aa). 5 LDL-receptor class B repeats span residues 384 to 426, 427 to 469, 470 to 513, 514 to 556, and 557 to 599; these read GYVY…DWVA, RNLY…HPVM, GLMY…DLQE, GKLY…LGDF, and IYWT…AKVV. Residues asparagine 445 and asparagine 498 are each glycosylated (N-linked (GlcNAc...) asparagine). The 41-residue stretch at 600–640 folds into the EGF-like 2 domain; sequence GTNPCADGNGGCSHLCFFTPRATKCGCPIGLELLSDMKTCI. Intrachain disulfides connect cysteine 604–cysteine 615, cysteine 611–cysteine 624, and cysteine 626–cysteine 639. The interval 643-902 is beta-propeller 3; it reads EAFLVFTSRA…VFHSSRQDGL (260 aa). LDL-receptor class B repeat units lie at residues 686-728, 729-771, 772-814, 815-854, and 855-897; these read NHIY…DWMG, KNLY…DPTK, GYIY…DYAD, QRLY…TQYS, and DYIY…FHSS. An N-linked (GlcNAc...) asparagine glycan is attached at asparagine 704. Residue asparagine 877 is glycosylated (N-linked (GlcNAc...) asparagine). An EGF-like 3 domain is found at 901 to 941; it reads GLNDCVHSNGQCGQLCLAIPGGHRCGCASHYTLDPSSRNCS. Disulfide bonds link cysteine 905–cysteine 916, cysteine 912–cysteine 925, and cysteine 927–cysteine 940. A beta-propeller 4 region spans residues 944-1211; sequence STFLLFSQKF…AVEEVSLEEF (268 aa). 5 LDL-receptor class B repeats span residues 988 to 1034, 1035 to 1077, 1078 to 1122, 1123 to 1164, and 1165 to 1206; these read KFIY…DIYS, RTLF…NAER, GYMY…DNAL, GKLF…VLGR, and HLYW…VEEV. The segment at 1002–1025 is disordered; it reads AKDDGTQPSMLTSPSQSLSPDRQP. Polar residues predominate over residues 1007–1021; that stretch reads TQPSMLTSPSQSLSP. In terms of domain architecture, EGF-like 4 spans 1212-1253; the sequence is SAHPCARDNGGCSHICIAKGDGTPRCSCPVHLVLLQNLLTCG. Cystine bridges form between cysteine 1216–cysteine 1227, cysteine 1223–cysteine 1237, cysteine 1239–cysteine 1252, cysteine 1258–cysteine 1272, cysteine 1265–cysteine 1285, cysteine 1279–cysteine 1294, cysteine 1297–cysteine 1309, cysteine 1304–cysteine 1322, cysteine 1316–cysteine 1331, cysteine 1335–cysteine 1347, cysteine 1342–cysteine 1360, and cysteine 1354–cysteine 1369. LDL-receptor class A domains are found at residues 1257–1295, 1296–1332, and 1334–1370; these read TCSP…EGCP, VCSA…ANCD, and VCLP…LMCE. Residues 1384–1406 form a helical membrane-spanning segment; that stretch reads SAIGPVIGIILSLFVMGGVYFVC. At 1407–1614 the chain is on the cytoplasmic side; it reads QRVMCQRYTG…PPPSPCTDSS (208 aa). The segment at 1474–1498 is disordered; the sequence is RNHVTGASSSSSSSTKATLYPPILN. The PPPSP motif A signature appears at 1499-1505; sequence PPPSPAT. The PPPSP motif B motif lies at 1537–1544; sequence PPTTPCST. Residues 1567–1599 form a disordered region; that stretch reads SDSDPYPPPPTPHSQYLSAEDSCPPSPGTERSY. The PPPSP motif C signature appears at 1573 to 1580; it reads PPPPTPHS. Residues 1590 to 1595 carry the PPPSP motif D motif; that stretch reads PPSPGT. The PPPSP motif E signature appears at 1604-1611; sequence PPPPSPCT.

The protein belongs to the LDLR family. In terms of assembly, homodimer; disulfide-linked. Forms phosphorylated oligomer aggregates on Wnt-signaling. Component of a WNT-signaling complex that contains a WNT protein, a FZD protein and LRP5 or LRP6. Interacts with FZD8; the interaction is formed on WNT-binding and signaling. Interacts (via the phosphorylated PPPSP motif domains) with AXIN1; the interaction prevents inhibition of beta-catenin phosphorylation and signaling and is enhanced in the presence of GSK3B and WNT1 or WNT3A. Interacts (via beta-propeller regions 3 and 4) with DKK1; the interaction, enhanced by MESD and/or KREMEN, inhibits beta-catenin signaling by preventing GSK3-mediated phosphorylation of the PPPSP motifs and subsequent, AXIN1 binding. Interacts with CSNK1E. Interacts with SOST; the interaction antagonizes canonical Wnt signaling. Interacts with APCDD1. Interacts with MESD; the interaction prevents the formation of LRP5 aggregates, targets LRP5 to the plasma membrane and, when complexed with KREMEN2, increases DKK1 binding. Interacts with CAPRIN2. In terms of processing, phosphorylation of cytoplasmic PPPSP motifs regulates the signal transduction of the Wnt signaling pathway through acting as a docking site for AXIN1. Widely expressed, with the highest expression levels in liver, heart, and lung and the lowest levels in brain and spleen.

It localises to the membrane. Its subcellular location is the endoplasmic reticulum. Its function is as follows. Acts as a coreceptor with members of the frizzled family of seven-transmembrane spanning receptors to transduce signal by Wnt proteins. Activates the canonical Wnt signaling pathway that controls cell fate determination and self-renewal during embryonic development and adult tissue regeneration. In particular, may play an important role in the development of the posterior patterning of the epiblast during gastrulation. During bone development, regulates osteoblast proliferation and differentiation thus determining bone mass. Mechanistically, the formation of the signaling complex between Wnt ligand, frizzled receptor and LRP5 coreceptor promotes the recruitment of AXIN1 to LRP5, stabilizing beta-catenin/CTNNB1 and activating TCF/LEF-mediated transcriptional programs. Acts as a coreceptor for non-Wnt proteins, such as norrin/NDP. Binding of norrin/NDP to frizzled 4/FZD4-LRP5 receptor complex triggers beta-catenin/CTNNB1-dependent signaling known to be required for retinal vascular development. Plays a role in controlling postnatal vascular regression in retina via macrophage-induced endothelial cell apoptosis. This is Low-density lipoprotein receptor-related protein 5 from Mus musculus (Mouse).